Consider the following 139-residue polypeptide: Protein Turandot B (139 aa).

The first 21 residues, 1–21 (MNFKTALICFALLLIGTLCSA), serve as a signal peptide directing secretion.

It belongs to the Turandot family.

Its subcellular location is the secreted. Its function is as follows. A humoral factor that may play a role in stress tolerance. This is Protein Turandot B from Drosophila sechellia (Fruit fly).